Here is a 441-residue protein sequence, read N- to C-terminus: 4-hydroxybenzoate polyprenyltransferase, mitochondrial (441 aa).

The N-terminal 95 residues, 1–95 (MLRKLTSNSS…TLGELVLRDY (95 aa)), are a transit peptide targeting the mitochondrion. The next 8 membrane-spanning stretches (helical) occupy residues 129–149 (IGSW…APAG), 154–174 (LWTL…GCTI), 204–224 (AWFF…ELNW), 225–245 (YSIV…LMKR), 246–266 (ITHW…LLGW), 271–291 (GSVM…WTIV), 322–342 (LWLS…GMVC), and 378–398 (FISN…GTLY). The tract at residues 405 to 441 (AGKSSTTSSSSTSSSSSPSSGLLLAATNHHQPARQAS) is disordered. Residues 408-424 (SSTTSSSSTSSSSSPSS) show a composition bias toward low complexity. Polar residues predominate over residues 432-441 (NHHQPARQAS).

Belongs to the UbiA prenyltransferase family. Mg(2+) is required as a cofactor.

Its subcellular location is the mitochondrion inner membrane. It catalyses the reaction an all-trans-polyprenyl diphosphate + 4-hydroxybenzoate = a 4-hydroxy-3-(all-trans-polyprenyl)benzoate + diphosphate. It functions in the pathway cofactor biosynthesis; ubiquinone biosynthesis. Its function is as follows. Catalyzes the prenylation of para-hydroxybenzoate (PHB) with an all-trans polyprenyl group. Mediates the second step in the final reaction sequence of coenzyme Q (CoQ) biosynthesis, which is the condensation of the polyisoprenoid side chain with PHB, generating the first membrane-bound Q intermediate. The protein is 4-hydroxybenzoate polyprenyltransferase, mitochondrial of Aedes aegypti (Yellowfever mosquito).